Here is a 510-residue protein sequence, read N- to C-terminus: F-box only protein 15 (510 aa).

The 41-residue stretch at methionine 77–isoleucine 117 folds into the F-box domain.

As to quaternary structure, directly interacts with SKP1 and CUL1.

In terms of biological role, substrate-recognition component of the SCF (SKP1-CUL1-F-box protein)-type E3 ubiquitin ligase complex. This chain is F-box only protein 15 (FBXO15), found in Homo sapiens (Human).